We begin with the raw amino-acid sequence, 330 residues long: Ketol-acid reductoisomerase (NADP(+)) (330 aa).

Residues 1-181 form the KARI N-terminal Rossmann domain; sequence MNVYYEQDAD…GGAKAGVIET (181 aa). NADP(+) is bound by residues 24–27, R47, S50, S52, and 82–85; these read YGSQ and DQYQ. H107 is a catalytic residue. G133 contributes to the NADP(+) binding site. Positions 182–327 constitute a KARI C-terminal knotted domain; the sequence is TIKDETETDL…AKLRNMMSWL (146 aa). Residues D190, E194, E226, and E230 each coordinate Mg(2+). S251 contacts substrate.

It belongs to the ketol-acid reductoisomerase family. Mg(2+) serves as cofactor.

The catalysed reaction is (2R)-2,3-dihydroxy-3-methylbutanoate + NADP(+) = (2S)-2-acetolactate + NADPH + H(+). It carries out the reaction (2R,3R)-2,3-dihydroxy-3-methylpentanoate + NADP(+) = (S)-2-ethyl-2-hydroxy-3-oxobutanoate + NADPH + H(+). It functions in the pathway amino-acid biosynthesis; L-isoleucine biosynthesis; L-isoleucine from 2-oxobutanoate: step 2/4. Its pathway is amino-acid biosynthesis; L-valine biosynthesis; L-valine from pyruvate: step 2/4. In terms of biological role, involved in the biosynthesis of branched-chain amino acids (BCAA). Catalyzes an alkyl-migration followed by a ketol-acid reduction of (S)-2-acetolactate (S2AL) to yield (R)-2,3-dihydroxy-isovalerate. In the isomerase reaction, S2AL is rearranged via a Mg-dependent methyl migration to produce 3-hydroxy-3-methyl-2-ketobutyrate (HMKB). In the reductase reaction, this 2-ketoacid undergoes a metal-dependent reduction by NADPH to yield (R)-2,3-dihydroxy-isovalerate. The sequence is that of Ketol-acid reductoisomerase (NADP(+)) from Prosthecochloris aestuarii (strain DSM 271 / SK 413).